Here is a 557-residue protein sequence, read N- to C-terminus: Small ribosomal subunit protein bS1 (557 aa).

S1 motif domains follow at residues 21–87, 105–171, 192–260, and 277–347; these read GSIV…LSRE, AETV…VSRR, GMEV…LGLK, and GTKL…LGLK. Lys-229, Lys-279, and Lys-363 each carry N6-acetyllysine. S1 motif domains are found at residues 364-434 and 451-520; these read GDRV…LGVK and GAIV…LSVR.

The protein belongs to the bacterial ribosomal protein bS1 family. In terms of assembly, part of the 30S ribosomal subunit. Some nascent polypeptide chains are able to cross-link to this protein in situ. Can be cross-linked to mRNA in the ribosome. In terms of processing, phosphorylated; probably on a serine.

In terms of biological role, required for translation of most natural mRNAs except for leaderless mRNA. Binds mRNA upstream of the Shine-Dalgarno (SD) sequence and helps it bind to the 30S ribosomal subunit; acts as an RNA chaperone to unfold structured mRNA on the ribosome but is not essential for mRNAs with strong SDs and little 5'-UTR structure, thus it may help fine-tune which mRNAs that are translated. Unwinds dsRNA by binding to transiently formed ssRNA regions; binds about 10 nucleotides. Has a preference for polypyrimidine tracts. Negatively autoregulates its own translation. This is Small ribosomal subunit protein bS1 (rpsA) from Escherichia coli O157:H7.